Here is a 238-residue protein sequence, read N- to C-terminus: Phosphoribosylaminoimidazole-succinocarboxamide synthase (238 aa).

Belongs to the SAICAR synthetase family.

It catalyses the reaction 5-amino-1-(5-phospho-D-ribosyl)imidazole-4-carboxylate + L-aspartate + ATP = (2S)-2-[5-amino-1-(5-phospho-beta-D-ribosyl)imidazole-4-carboxamido]succinate + ADP + phosphate + 2 H(+). It functions in the pathway purine metabolism; IMP biosynthesis via de novo pathway; 5-amino-1-(5-phospho-D-ribosyl)imidazole-4-carboxamide from 5-amino-1-(5-phospho-D-ribosyl)imidazole-4-carboxylate: step 1/2. The chain is Phosphoribosylaminoimidazole-succinocarboxamide synthase from Desulfitobacterium hafniense (strain DSM 10664 / DCB-2).